We begin with the raw amino-acid sequence, 293 residues long: DOMON domain-containing protein FRRS1L (293 aa).

Positions 1–28 are cleaved as a signal peptide; it reads MARPPRQHPGVWASLLLLLLTGPAACAA. Residues 29–61 are disordered; sequence SPADDGAGPGGRGPRGRARGDTGADEAVPRHDS. Residues 46–61 show a composition bias toward basic and acidic residues; the sequence is ARGDTGADEAVPRHDS. Positions 119–234 constitute a DOMON domain; sequence CDYFLSYRMI…WYYLFAWGPA (116 aa). The chain crosses the membrane as a helical span at residues 271–291; that stretch reads TFSSPFCLLLIVALTFYLLMG.

Component of the outer core of AMPAR complex. AMPAR complex consists of an inner core made of 4 pore-forming GluA/GRIA proteins (GRIA1, GRIA2, GRIA3 and GRIA4) and 4 major auxiliary subunits arranged in a twofold symmetry. One of the two pairs of distinct binding sites is occupied either by CNIH2, CNIH3 or CACNG2, CACNG3. The other harbors CACNG2, CACNG3, CACNG4, CACNG8 or GSG1L. This inner core of AMPAR complex is complemented by outer core constituents binding directly to the GluA/GRIA proteins at sites distinct from the interaction sites of the inner core constituents. Outer core constituents include at least PRRT1, PRRT2, CKAMP44/SHISA9, FRRS1L and NRN1. The proteins of the inner and outer core serve as a platform for other, more peripherally associated AMPAR constituents. Alone or in combination, these auxiliary subunits control the gating and pharmacology of the AMPAR complex and profoundly impact their biogenesis and protein processing. In terms of tissue distribution, expressed in adult and fetal brain. Very weak expression in medulla, spinal cord and in adult ovary.

It is found in the cell membrane. The protein resides in the synapse. Its function is as follows. Important modulator of glutamate signaling pathway. The polypeptide is DOMON domain-containing protein FRRS1L (FRRS1L) (Homo sapiens (Human)).